Here is a 204-residue protein sequence, read N- to C-terminus: Guanylate kinase (204 aa).

The region spanning 18–196 (PKLFTISAPA…SYEILKSIFI (179 aa)) is the Guanylate kinase-like domain. 25 to 32 (APAGAGKT) contributes to the ATP binding site.

This sequence belongs to the guanylate kinase family.

Its subcellular location is the cytoplasm. The enzyme catalyses GMP + ATP = GDP + ADP. Its function is as follows. Essential for recycling GMP and indirectly, cGMP. The protein is Guanylate kinase of Chlamydia caviae (strain ATCC VR-813 / DSM 19441 / 03DC25 / GPIC) (Chlamydophila caviae).